Reading from the N-terminus, the 313-residue chain is MASGNLPWELEEEILCRLPLGSLVRLRSVCKHWNDFFNDKWFIKKSLGCARPQFIILPESKIYSIGTIGLDGVDPKIEVRELACQFHFEAEKWAFTAACDGLLFRDFWNQGVTIWNPWLRQVGWIEYKENRDFRFCGVGYDAGKPEKGYKIFGYFNRFYDTKLKIDHRFAIFECASQAVKFIDSPEWPMLAGRGEYVSLNGNLYWTAYNEETREHFLGSFNFSTEISMRFCLLPCAKHVSGLRDKLVLTVFKGDRFALLKQSRISKDTKVLTAQYGPKARTKKNENAEKACLKSYGSLKPDRLEKLKKSMKRY.

Residues 1 to 46 form the F-box domain; the sequence is MASGNLPWELEEEILCRLPLGSLVRLRSVCKHWNDFFNDKWFIKKS.

This chain is Probable F-box protein At3g44130, found in Arabidopsis thaliana (Mouse-ear cress).